The chain runs to 205 residues: GTP cyclohydrolase-2 (205 aa).

49 to 53 (RLHSE) lines the GTP pocket. The Zn(2+) site is built by cysteine 54, cysteine 65, and cysteine 67. GTP is bound by residues glutamine 70, 92 to 94 (EGR), and threonine 114. Residue aspartate 126 is the Proton acceptor of the active site. Residue arginine 128 is the Nucleophile of the active site. Positions 149 and 154 each coordinate GTP.

This sequence belongs to the GTP cyclohydrolase II family. The cofactor is Zn(2+).

The enzyme catalyses GTP + 4 H2O = 2,5-diamino-6-hydroxy-4-(5-phosphoribosylamino)-pyrimidine + formate + 2 phosphate + 3 H(+). The protein operates within cofactor biosynthesis; riboflavin biosynthesis; 5-amino-6-(D-ribitylamino)uracil from GTP: step 1/4. In terms of biological role, catalyzes the conversion of GTP to 2,5-diamino-6-ribosylamino-4(3H)-pyrimidinone 5'-phosphate (DARP), formate and pyrophosphate. This is GTP cyclohydrolase-2 from Pseudomonas entomophila (strain L48).